Consider the following 484-residue polypeptide: Probable glycine dehydrogenase (decarboxylating) subunit 2 (484 aa).

Residue lysine 270 is modified to N6-(pyridoxal phosphate)lysine.

This sequence belongs to the GcvP family. C-terminal subunit subfamily. The glycine cleavage system is composed of four proteins: P, T, L and H. In this organism, the P 'protein' is a heterodimer of two subunits. Pyridoxal 5'-phosphate serves as cofactor.

It catalyses the reaction N(6)-[(R)-lipoyl]-L-lysyl-[glycine-cleavage complex H protein] + glycine + H(+) = N(6)-[(R)-S(8)-aminomethyldihydrolipoyl]-L-lysyl-[glycine-cleavage complex H protein] + CO2. In terms of biological role, the glycine cleavage system catalyzes the degradation of glycine. The P protein binds the alpha-amino group of glycine through its pyridoxal phosphate cofactor; CO(2) is released and the remaining methylamine moiety is then transferred to the lipoamide cofactor of the H protein. The polypeptide is Probable glycine dehydrogenase (decarboxylating) subunit 2 (Desulforamulus reducens (strain ATCC BAA-1160 / DSM 100696 / MI-1) (Desulfotomaculum reducens)).